A 380-amino-acid chain; its full sequence is Transmembrane protein 229A (380 aa).

A disordered region spans residues 1-40 (MAGSDVDSEGPARRGGAARRPGAPGGPGSEAAAGCPEPLS). 2 helical membrane passes run 51–71 (LPAW…DVLV) and 117–137 (AFVF…TLAG). The tract at residues 188-236 (RQQQQQQQQQQQQRRGALPVPPGARVPTAAGARRRRPRGPRGAGGAPSQ) is disordered. Over residues 190-202 (QQQQQQQQQQQRR) the composition is skewed to low complexity. A run of 4 helical transmembrane segments spans residues 244 to 264 (FLFF…FFNV), 278 to 298 (LWSF…YFHL), 310 to 330 (VPIY…GLRT), and 343 to 363 (LNFM…LSVY).

This sequence belongs to the TMEM229 family.

It is found in the membrane. The polypeptide is Transmembrane protein 229A (TMEM229A) (Homo sapiens (Human)).